The sequence spans 909 residues: Protein translocase subunit SecA (909 aa).

ATP contacts are provided by residues Gln87, 105-109 (GEGKT), and Asp507. Residues 834–909 (EAVEEQRRRQ…KYKQCCGKLS (76 aa)) are disordered. The segment covering 837 to 848 (EEQRRRQGDMQY) has biased composition (basic and acidic residues). The span at 859–871 (QGAGGEGAAGGTA) shows a compositional bias: gly residues. Positions 893, 895, 904, and 905 each coordinate Zn(2+).

Belongs to the SecA family. In terms of assembly, monomer and homodimer. Part of the essential Sec protein translocation apparatus which comprises SecA, SecYEG and auxiliary proteins SecDF-YajC and YidC. Requires Zn(2+) as cofactor.

The protein localises to the cell inner membrane. The protein resides in the cytoplasm. It catalyses the reaction ATP + H2O + cellular proteinSide 1 = ADP + phosphate + cellular proteinSide 2.. Part of the Sec protein translocase complex. Interacts with the SecYEG preprotein conducting channel. Has a central role in coupling the hydrolysis of ATP to the transfer of proteins into and across the cell membrane, serving both as a receptor for the preprotein-SecB complex and as an ATP-driven molecular motor driving the stepwise translocation of polypeptide chains across the membrane. This is Protein translocase subunit SecA from Alkalilimnicola ehrlichii (strain ATCC BAA-1101 / DSM 17681 / MLHE-1).